Reading from the N-terminus, the 195-residue chain is Dephospho-CoA kinase (195 aa).

The region spanning 4–195 (IIGLTGGIAS…EQILDALQRL (192 aa)) is the DPCK domain. 12 to 17 (ASGKST) is a binding site for ATP.

This sequence belongs to the CoaE family.

It localises to the cytoplasm. It catalyses the reaction 3'-dephospho-CoA + ATP = ADP + CoA + H(+). The protein operates within cofactor biosynthesis; coenzyme A biosynthesis; CoA from (R)-pantothenate: step 5/5. In terms of biological role, catalyzes the phosphorylation of the 3'-hydroxyl group of dephosphocoenzyme A to form coenzyme A. This chain is Dephospho-CoA kinase, found in Streptococcus agalactiae serotype III (strain NEM316).